We begin with the raw amino-acid sequence, 410 residues long: Cysteine desulfurase IscS (410 aa).

Residues 80 to 81 (AT), Asn160, Gln188, and 208 to 210 (SGH) contribute to the pyridoxal 5'-phosphate site. Lys211 is modified (N6-(pyridoxal phosphate)lysine). Thr248 contributes to the pyridoxal 5'-phosphate binding site. Cys334 acts as the Cysteine persulfide intermediate in catalysis. Cys334 is a binding site for [2Fe-2S] cluster.

Belongs to the class-V pyridoxal-phosphate-dependent aminotransferase family. NifS/IscS subfamily. As to quaternary structure, homodimer. Forms a heterotetramer with IscU, interacts with other sulfur acceptors. It depends on pyridoxal 5'-phosphate as a cofactor.

It is found in the cytoplasm. It carries out the reaction (sulfur carrier)-H + L-cysteine = (sulfur carrier)-SH + L-alanine. Its pathway is cofactor biosynthesis; iron-sulfur cluster biosynthesis. Functionally, master enzyme that delivers sulfur to a number of partners involved in Fe-S cluster assembly, tRNA modification or cofactor biosynthesis. Catalyzes the removal of elemental sulfur atoms from cysteine to produce alanine. Functions as a sulfur delivery protein for Fe-S cluster synthesis onto IscU, an Fe-S scaffold assembly protein, as well as other S acceptor proteins. This chain is Cysteine desulfurase IscS, found in Rickettsia felis (strain ATCC VR-1525 / URRWXCal2) (Rickettsia azadi).